Consider the following 213-residue polypeptide: 2,3-bisphosphoglycerate-dependent phosphoglycerate mutase (213 aa).

Substrate is bound by residues 8–15 (RHGQSEWN), 21–22 (TG), Arg58, 84–87 (ERNY), Lys95, 111–112 (RR), and 155–156 (GN). His9 (tele-phosphohistidine intermediate) is an active-site residue. The Proton donor/acceptor role is filled by Glu84.

This sequence belongs to the phosphoglycerate mutase family. BPG-dependent PGAM subfamily.

The catalysed reaction is (2R)-2-phosphoglycerate = (2R)-3-phosphoglycerate. Its pathway is carbohydrate degradation; glycolysis; pyruvate from D-glyceraldehyde 3-phosphate: step 3/5. Functionally, catalyzes the interconversion of 2-phosphoglycerate and 3-phosphoglycerate. This Cytophaga hutchinsonii (strain ATCC 33406 / DSM 1761 / CIP 103989 / NBRC 15051 / NCIMB 9469 / D465) protein is 2,3-bisphosphoglycerate-dependent phosphoglycerate mutase.